The chain runs to 360 residues: Mitogen-activated protein kinase 14 (360 aa).

Residue serine 2 is modified to N-acetylserine. Residue serine 2 is modified to Phosphoserine. Threonine 16 carries the post-translational modification Phosphothreonine. Residues 24–308 (YQNLSPVGSG…AAQALAHAYF (285 aa)) enclose the Protein kinase domain. Residues 30–38 (VGSGAYGSV) and lysine 53 each bind ATP. Residues lysine 53 and lysine 152 each carry the N6-acetyllysine modification. The active-site Proton acceptor is aspartate 168. At threonine 180 the chain carries Phosphothreonine; by MAP2K3, MAP2K4, MAP2K6 and autocatalysis. The short motif at 180–182 (TGY) is the TXY element. Residue tyrosine 182 is modified to Phosphotyrosine; by MAP2K3, MAP2K4, MAP2K6 and autocatalysis. Residue threonine 263 is modified to Phosphothreonine. Phosphotyrosine; by ZAP70 is present on tyrosine 323.

The protein belongs to the protein kinase superfamily. CMGC Ser/Thr protein kinase family. MAP kinase subfamily. In terms of assembly, component of a signaling complex containing at least AKAP13, PKN1, MAPK14, ZAK and MAP2K3. Within this complex, AKAP13 interacts directly with PKN1, which in turn recruits MAPK14, MAP2K3 and ZAK. Binds to a kinase interaction motif within the protein tyrosine phosphatase, PTPRR. This interaction retains MAPK14 in the cytoplasm and prevents nuclear accumulation. Interacts with SPAG9 and GADD45A. Interacts with CDC25B, CDC25C, DUSP1, DUSP10, DUSP16, NP60, SUPT20H and TAB1. Interacts with casein kinase II subunits CSNK2A1 and CSNK2B. Interacts with PPM1D. Interacts with CDK5RAP3; recruits PPM1D to MAPK14 and may regulate its dephosphorylation. Interacts with DUSP2; this interaction does not lead to catalytic activation of DUSP2 and dephosphrylation of MAPK14. Mg(2+) is required as a cofactor. Post-translationally, dually phosphorylated on Thr-180 and Tyr-182 by the MAP2Ks MAP2K3/MKK3, MAP2K4/MKK4 and MAP2K6/MKK6 in response to inflammatory citokines, environmental stress or growth factors, which activates the enzyme. Dual phosphorylation can also be mediated by TAB1-mediated autophosphorylation. TCR engagement in T-cells also leads to Tyr-323 phosphorylation by ZAP70. Dephosphorylated and inactivated by DUPS1, DUSP10 and DUSP16. PPM1D also mediates dephosphorylation and inactivation of MAPK14. In terms of processing, acetylated at Lys-53 and Lys-152 by KAT2B and EP300. Acetylation at Lys-53 increases the affinity for ATP and enhances kinase activity. Lys-53 and Lys-152 are deacetylated by HDAC3. Ubiquitinated. Ubiquitination leads to degradation by the proteasome pathway. In terms of tissue distribution, brain, heart, placenta, pancreas and skeletal muscle. Expressed to a lesser extent in lung, liver and kidney.

The protein localises to the cytoplasm. It localises to the nucleus. The catalysed reaction is L-seryl-[protein] + ATP = O-phospho-L-seryl-[protein] + ADP + H(+). The enzyme catalyses L-threonyl-[protein] + ATP = O-phospho-L-threonyl-[protein] + ADP + H(+). With respect to regulation, activated by cell stresses such as DNA damage, heat shock, osmotic shock, anisomycin and sodium arsenite, as well as pro-inflammatory stimuli such as bacterial lipopolysaccharide (LPS) and interleukin-1. Activation occurs through dual phosphorylation of Thr-180 and Tyr-182 by either of two dual specificity kinases, MAP2K3/MKK3 or MAP2K6/MKK6, and potentially also MAP2K4/MKK4, as well as by TAB1-mediated autophosphorylation. MAPK14 phosphorylated on both Thr-180 and Tyr-182 is 10-20-fold more active than MAPK14 phosphorylated only on Thr-180, whereas MAPK14 phosphorylated on Tyr-182 alone is inactive. whereas Thr-180 is necessary for catalysis, Tyr-182 may be required for auto-activation and substrate recognition. Phosphorylated at Tyr-323 by ZAP70 in an alternative activation pathway in response to TCR signaling in T-cells. This alternative pathway is inhibited by GADD45A. Inhibited by dual specificity phosphatases, such as DUSP1, DUSP10, and DUSP16. Specifically inhibited by the binding of pyridinyl-imidazole compounds, which are cytokine-suppressive anti-inflammatory drugs (CSAID). Isoform Mxi2 is 100-fold less sensitive to these agents than the other isoforms and is not inhibited by DUSP1. Isoform Exip is not activated by MAP2K6. SB203580 is an inhibitor of MAPK14. Functionally, serine/threonine kinase which acts as an essential component of the MAP kinase signal transduction pathway. MAPK14 is one of the four p38 MAPKs which play an important role in the cascades of cellular responses evoked by extracellular stimuli such as pro-inflammatory cytokines or physical stress leading to direct activation of transcription factors. Accordingly, p38 MAPKs phosphorylate a broad range of proteins and it has been estimated that they may have approximately 200 to 300 substrates each. Some of the targets are downstream kinases which are activated through phosphorylation and further phosphorylate additional targets. RPS6KA5/MSK1 and RPS6KA4/MSK2 can directly phosphorylate and activate transcription factors such as CREB1, ATF1, the NF-kappa-B isoform RELA/NFKB3, STAT1 and STAT3, but can also phosphorylate histone H3 and the nucleosomal protein HMGN1. RPS6KA5/MSK1 and RPS6KA4/MSK2 play important roles in the rapid induction of immediate-early genes in response to stress or mitogenic stimuli, either by inducing chromatin remodeling or by recruiting the transcription machinery. On the other hand, two other kinase targets, MAPKAPK2/MK2 and MAPKAPK3/MK3, participate in the control of gene expression mostly at the post-transcriptional level, by phosphorylating ZFP36 (tristetraprolin) and ELAVL1, and by regulating EEF2K, which is important for the elongation of mRNA during translation. MKNK1/MNK1 and MKNK2/MNK2, two other kinases activated by p38 MAPKs, regulate protein synthesis by phosphorylating the initiation factor EIF4E2. MAPK14 also interacts with casein kinase II, leading to its activation through autophosphorylation and further phosphorylation of TP53/p53. In the cytoplasm, the p38 MAPK pathway is an important regulator of protein turnover. For example, CFLAR is an inhibitor of TNF-induced apoptosis whose proteasome-mediated degradation is regulated by p38 MAPK phosphorylation. In a similar way, MAPK14 phosphorylates the ubiquitin ligase SIAH2, regulating its activity towards EGLN3. MAPK14 may also inhibit the lysosomal degradation pathway of autophagy by interfering with the intracellular trafficking of the transmembrane protein ATG9. Another function of MAPK14 is to regulate the endocytosis of membrane receptors by different mechanisms that impinge on the small GTPase RAB5A. In addition, clathrin-mediated EGFR internalization induced by inflammatory cytokines and UV irradiation depends on MAPK14-mediated phosphorylation of EGFR itself as well as of RAB5A effectors. Ectodomain shedding of transmembrane proteins is regulated by p38 MAPKs as well. In response to inflammatory stimuli, p38 MAPKs phosphorylate the membrane-associated metalloprotease ADAM17. Such phosphorylation is required for ADAM17-mediated ectodomain shedding of TGF-alpha family ligands, which results in the activation of EGFR signaling and cell proliferation. Another p38 MAPK substrate is FGFR1. FGFR1 can be translocated from the extracellular space into the cytosol and nucleus of target cells, and regulates processes such as rRNA synthesis and cell growth. FGFR1 translocation requires p38 MAPK activation. In the nucleus, many transcription factors are phosphorylated and activated by p38 MAPKs in response to different stimuli. Classical examples include ATF1, ATF2, ATF6, ELK1, PTPRH, DDIT3, TP53/p53 and MEF2C and MEF2A. The p38 MAPKs are emerging as important modulators of gene expression by regulating chromatin modifiers and remodelers. The promoters of several genes involved in the inflammatory response, such as IL6, IL8 and IL12B, display a p38 MAPK-dependent enrichment of histone H3 phosphorylation on 'Ser-10' (H3S10ph) in LPS-stimulated myeloid cells. This phosphorylation enhances the accessibility of the cryptic NF-kappa-B-binding sites marking promoters for increased NF-kappa-B recruitment. Phosphorylates CDC25B and CDC25C which is required for binding to 14-3-3 proteins and leads to initiation of a G2 delay after ultraviolet radiation. Phosphorylates TIAR following DNA damage, releasing TIAR from GADD45A mRNA and preventing mRNA degradation. The p38 MAPKs may also have kinase-independent roles, which are thought to be due to the binding to targets in the absence of phosphorylation. Protein O-Glc-N-acylation catalyzed by the OGT is regulated by MAPK14, and, although OGT does not seem to be phosphorylated by MAPK14, their interaction increases upon MAPK14 activation induced by glucose deprivation. This interaction may regulate OGT activity by recruiting it to specific targets such as neurofilament H, stimulating its O-Glc-N-acylation. Required in mid-fetal development for the growth of embryo-derived blood vessels in the labyrinth layer of the placenta. Also plays an essential role in developmental and stress-induced erythropoiesis, through regulation of EPO gene expression. Isoform MXI2 activation is stimulated by mitogens and oxidative stress and only poorly phosphorylates ELK1 and ATF2. Isoform EXIP may play a role in the early onset of apoptosis. Phosphorylates S100A9 at 'Thr-113'. Phosphorylates NLRP1 downstream of MAP3K20/ZAK in response to UV-B irradiation and ribosome collisions, promoting activation of the NLRP1 inflammasome and pyroptosis. (Microbial infection) Activated by phosphorylation by M.tuberculosis EsxA in T-cells leading to inhibition of IFN-gamma production; phosphorylation is apparent within 15 minutes and is inhibited by kinase-specific inhibitors SB203580 and siRNA. The polypeptide is Mitogen-activated protein kinase 14 (Homo sapiens (Human)).